A 163-amino-acid chain; its full sequence is Staphylokinase (163 aa).

Residues 1–27 (MLKRSLLFLTVLLLLFSFSSITNEVSA) form the signal peptide.

This sequence belongs to the staphylokinase family.

It localises to the secreted. Potent plasminogen activator that converts plasminogen into plasmin. It forms a 1:1 complex with plasmin, which in turn activates other plasminogen molecules. This chain is Staphylokinase (sak), found in Staphylococcus aureus (Bacteriophage P42D).